The chain runs to 64 residues: Putative antitoxin VapB4 (64 aa).

It belongs to the UPF0165 family.

Possibly the antitoxin component of a type II toxin-antitoxin (TA) system. Its cognate toxin is VapC4 (Potential). The chain is Putative antitoxin VapB4 (vapB4) from Archaeoglobus fulgidus (strain ATCC 49558 / DSM 4304 / JCM 9628 / NBRC 100126 / VC-16).